The sequence spans 180 residues: Large ribosomal subunit protein uL6 (180 aa).

The disordered stretch occupies residues 158 to 180; the sequence is YSGKGISYKGEKIRRKEGKTASK.

Belongs to the universal ribosomal protein uL6 family. In terms of assembly, part of the 50S ribosomal subunit.

Its function is as follows. This protein binds to the 23S rRNA, and is important in its secondary structure. It is located near the subunit interface in the base of the L7/L12 stalk, and near the tRNA binding site of the peptidyltransferase center. The chain is Large ribosomal subunit protein uL6 from Mycoplasmopsis synoviae (strain 53) (Mycoplasma synoviae).